The chain runs to 230 residues: Type II restriction enzyme SinI (230 aa).

It catalyses the reaction Endonucleolytic cleavage of DNA to give specific double-stranded fragments with terminal 5'-phosphates.. A P subtype restriction enzyme that recognizes the double-stranded sequence 5'-GGWCC-3' and cleaves after G-1. The chain is Type II restriction enzyme SinI (sinIR) from Salmonella infantis.